The chain runs to 91 residues: Small ribosomal subunit protein uS17 (91 aa).

This sequence belongs to the universal ribosomal protein uS17 family. In terms of assembly, part of the 30S ribosomal subunit.

One of the primary rRNA binding proteins, it binds specifically to the 5'-end of 16S ribosomal RNA. This chain is Small ribosomal subunit protein uS17, found in Malacoplasma penetrans (strain HF-2) (Mycoplasma penetrans).